A 420-amino-acid chain; its full sequence is UDP-N-acetylglucosamine 1-carboxyvinyltransferase (420 aa).

22-23 (KN) is a phosphoenolpyruvate binding site. R92 contributes to the UDP-N-acetyl-alpha-D-glucosamine binding site. Catalysis depends on C116, which acts as the Proton donor. C116 carries the 2-(S-cysteinyl)pyruvic acid O-phosphothioketal modification. Residues 121–125 (RPVDQ), D304, and I326 contribute to the UDP-N-acetyl-alpha-D-glucosamine site.

It belongs to the EPSP synthase family. MurA subfamily.

Its subcellular location is the cytoplasm. It catalyses the reaction phosphoenolpyruvate + UDP-N-acetyl-alpha-D-glucosamine = UDP-N-acetyl-3-O-(1-carboxyvinyl)-alpha-D-glucosamine + phosphate. The protein operates within cell wall biogenesis; peptidoglycan biosynthesis. Cell wall formation. Adds enolpyruvyl to UDP-N-acetylglucosamine. This chain is UDP-N-acetylglucosamine 1-carboxyvinyltransferase, found in Paraburkholderia phytofirmans (strain DSM 17436 / LMG 22146 / PsJN) (Burkholderia phytofirmans).